Consider the following 145-residue polypeptide: Bacilliredoxin MW1318 (145 aa).

The protein belongs to the bacilliredoxin family.

The polypeptide is Bacilliredoxin MW1318 (Staphylococcus aureus (strain MW2)).